Reading from the N-terminus, the 200-residue chain is NADH-quinone oxidoreductase subunit C 1 (200 aa).

This sequence belongs to the complex I 30 kDa subunit family. NDH-1 is composed of 14 different subunits. Subunits NuoB, C, D, E, F, and G constitute the peripheral sector of the complex.

The protein localises to the cell inner membrane. It carries out the reaction a quinone + NADH + 5 H(+)(in) = a quinol + NAD(+) + 4 H(+)(out). Functionally, NDH-1 shuttles electrons from NADH, via FMN and iron-sulfur (Fe-S) centers, to quinones in the respiratory chain. The immediate electron acceptor for the enzyme in this species is believed to be ubiquinone. Couples the redox reaction to proton translocation (for every two electrons transferred, four hydrogen ions are translocated across the cytoplasmic membrane), and thus conserves the redox energy in a proton gradient. This is NADH-quinone oxidoreductase subunit C 1 from Rhizobium etli (strain CIAT 652).